Reading from the N-terminus, the 326-residue chain is Protein farnesyltransferase/geranylgeranyltransferase type-1 subunit alpha (326 aa).

PFTA repeat units follow at residues Arg-55–His-89, Asp-90–Pro-124, Val-126–Gly-160, Trp-161–Leu-194, and Met-201–Glu-235.

The protein belongs to the protein prenyltransferase subunit alpha family. In terms of assembly, heterodimer of an alpha and a beta subunit. Mg(2+) is required as a cofactor.

It carries out the reaction L-cysteinyl-[protein] + (2E,6E)-farnesyl diphosphate = S-(2E,6E)-farnesyl-L-cysteinyl-[protein] + diphosphate. The enzyme catalyses geranylgeranyl diphosphate + L-cysteinyl-[protein] = S-geranylgeranyl-L-cysteinyl-[protein] + diphosphate. Its function is as follows. Essential subunit of both the farnesyltransferase and the geranylgeranyltransferase complex. Contributes to the transfer of a farnesyl or geranylgeranyl moiety from farnesyl or geranylgeranyl diphosphate to a cysteine at the fourth position from the C-terminus of several proteins having the C-terminal sequence Cys-aliphatic-aliphatic-X. This Arabidopsis thaliana (Mouse-ear cress) protein is Protein farnesyltransferase/geranylgeranyltransferase type-1 subunit alpha (FTA).